Reading from the N-terminus, the 235-residue chain is Motile sperm domain-containing protein 3 (235 aa).

Disordered stretches follow at residues 1–30 and 143–170; these read MRRGAPQDQELVGPGAPGRGSRGAPPPSGP and ELQGQSDPTPHPEPHSWTASSTAQPFPE. The 113-residue stretch at 33–145 folds into the MSP domain; the sequence is PVLVFPPDLV…RAPAYPLELQ (113 aa). Transmembrane regions (helical) follow at residues 180–200 and 213–233; these read SFLLFLLMGTVSVAFLLLPLQ and VSLGQKLVAAYVLGLLTMVFL.

The protein resides in the membrane. The protein is Motile sperm domain-containing protein 3 (MOSPD3) of Bos taurus (Bovine).